Consider the following 124-residue polypeptide: Small ribosomal subunit protein uS12 (124 aa).

3-methylthioaspartic acid is present on Asp-89. Residues 103-124 (DTAGVKDRRQSRSKYGAKSPKE) form a disordered region.

The protein belongs to the universal ribosomal protein uS12 family. Part of the 30S ribosomal subunit. Contacts proteins S8 and S17. May interact with IF1 in the 30S initiation complex.

Its function is as follows. With S4 and S5 plays an important role in translational accuracy. In terms of biological role, interacts with and stabilizes bases of the 16S rRNA that are involved in tRNA selection in the A site and with the mRNA backbone. Located at the interface of the 30S and 50S subunits, it traverses the body of the 30S subunit contacting proteins on the other side and probably holding the rRNA structure together. The combined cluster of proteins S8, S12 and S17 appears to hold together the shoulder and platform of the 30S subunit. In Prochlorococcus marinus (strain NATL1A), this protein is Small ribosomal subunit protein uS12.